A 316-amino-acid polypeptide reads, in one-letter code: MTNEFHHVTVLLHETVDMLDIKPDGIYVDATLGGAGHSSYLLSQLSEKGHLYCFDQDQKAIDNAQVRLKDYIDKGMVTFIKDNFRNLKSNLEALGVSEIDGILYDLGVSSPQLDERERGFSYKQDAKLDMRMNEEASLTAYDVVNTYPYNDLVRIFFKYGEDKFSKQIARKIEQARQVKPIETTTELAEIIKSAKPAKELKKKGHPAKQIFQAIRIEVNDELGAADESIQEALDLLAVNGRISVITFHSLEDRLTKQLFKEASTADVPKGLPFIPEDLQPKVALVNRKPILPSQEELEANNRSHSAKLRVAKKIRK.

Residues 35 to 37 (AGH), D55, F84, D105, and Q112 contribute to the S-adenosyl-L-methionine site.

Belongs to the methyltransferase superfamily. RsmH family.

It localises to the cytoplasm. It carries out the reaction cytidine(1402) in 16S rRNA + S-adenosyl-L-methionine = N(4)-methylcytidine(1402) in 16S rRNA + S-adenosyl-L-homocysteine + H(+). In terms of biological role, specifically methylates the N4 position of cytidine in position 1402 (C1402) of 16S rRNA. This chain is Ribosomal RNA small subunit methyltransferase H, found in Streptococcus thermophilus (strain ATCC BAA-250 / LMG 18311).